The sequence spans 236 residues: Probable transcriptional regulatory protein FP0835 (236 aa).

It belongs to the TACO1 family.

The protein localises to the cytoplasm. The polypeptide is Probable transcriptional regulatory protein FP0835 (Flavobacterium psychrophilum (strain ATCC 49511 / DSM 21280 / CIP 103535 / JIP02/86)).